The chain runs to 301 residues: Acetyl-coenzyme A carboxylase carboxyl transferase subunit beta (301 aa).

The CoA carboxyltransferase N-terminal domain occupies 25-294 (LWIKCPETGE…SAANDMNGGA (270 aa)).

This sequence belongs to the AccD/PCCB family. In terms of assembly, acetyl-CoA carboxylase is a heterohexamer composed of biotin carboxyl carrier protein (AccB), biotin carboxylase (AccC) and two subunits each of ACCase subunit alpha (AccA) and ACCase subunit beta (AccD).

It localises to the cytoplasm. The enzyme catalyses N(6)-carboxybiotinyl-L-lysyl-[protein] + acetyl-CoA = N(6)-biotinyl-L-lysyl-[protein] + malonyl-CoA. It functions in the pathway lipid metabolism; malonyl-CoA biosynthesis; malonyl-CoA from acetyl-CoA: step 1/1. In terms of biological role, component of the acetyl coenzyme A carboxylase (ACC) complex. Biotin carboxylase (BC) catalyzes the carboxylation of biotin on its carrier protein (BCCP) and then the CO(2) group is transferred by the transcarboxylase to acetyl-CoA to form malonyl-CoA. The protein is Acetyl-coenzyme A carboxylase carboxyl transferase subunit beta of Rhizobium etli (strain CIAT 652).